A 444-amino-acid polypeptide reads, in one-letter code: MHPHDQTIFALSSGRLPSAIAIVRLSGPHAGAALQMLAGKMPAPRLVTRALLRDPQGEPIDDAVVLWFPAPASATGENVVELHIHGSRAVIATLFGVLSETPELRPAEPGEFTRRAFENGKLDLTEAEGLDDLIHADTDRQRRQALRQLKGLLGDKVRRWREQIIEAAALIEAGIDFSDEGDVPAELLAPALSRVQQLLLEIEAVLAAQGRAERLRDGLTVVIAGPPNAGKSTLMNQLARREVAIVSPQAGTTRDLIEVQLDLDGYPVTVIDTAGIRETDDPVEQEGVRRARDRAAHADLVLWLSEHDGAEVERQGETPLWLVRTKTDLDGAERATRPDTKASRTFGISARSGAGMGALLDALVGFARNFFGSTESGLITRERQRQSLRQTADALQRSLDTVDLGEELVAEELRIAALALGRLLGRVDVEDLLDVIFREFCIGK.

Positions 24, 81, and 121 each coordinate (6S)-5-formyl-5,6,7,8-tetrahydrofolate. The TrmE-type G domain maps to 218–368 (GLTVVIAGPP…LLDALVGFAR (151 aa)). Residues 228 to 233 (NAGKST), 247 to 253 (SPQAGTT), 272 to 275 (DTAG), and 349 to 351 (SAR) each bind GTP. 2 residues coordinate Mg(2+): serine 232 and threonine 253. Lysine 444 lines the (6S)-5-formyl-5,6,7,8-tetrahydrofolate pocket.

Belongs to the TRAFAC class TrmE-Era-EngA-EngB-Septin-like GTPase superfamily. TrmE GTPase family. In terms of assembly, homodimer. Heterotetramer of two MnmE and two MnmG subunits. K(+) is required as a cofactor.

Its subcellular location is the cytoplasm. In terms of biological role, exhibits a very high intrinsic GTPase hydrolysis rate. Involved in the addition of a carboxymethylaminomethyl (cmnm) group at the wobble position (U34) of certain tRNAs, forming tRNA-cmnm(5)s(2)U34. The polypeptide is tRNA modification GTPase MnmE (Bradyrhizobium sp. (strain ORS 278)).